The primary structure comprises 1058 residues: Carbamoyl phosphate synthase large chain (1058 aa).

A carboxyphosphate synthetic domain region spans residues 1 to 401 (MPKRKDIQKI…SLLKACRSLE (401 aa)). ATP-binding residues include R129, R169, G175, G176, R208, I210, E215, G241, I242, H243, Q284, and E298. The 195-residue stretch at 133–327 (KQLMQELDQP…IAKLAAKIAV (195 aa)) folds into the ATP-grasp 1 domain. Mg(2+) is bound by residues Q284, E298, and N300. Positions 284, 298, and 300 each coordinate Mn(2+). The interval 402–546 (IGVCHNEMTS…YSTYELENES (145 aa)) is oligomerization domain. A carbamoyl phosphate synthetic domain region spans residues 547 to 929 (VQSNKESILV…ALYKAFEANN (383 aa)). The ATP-grasp 2 domain maps to 671 to 861 (EKALKELGIP…MAQIATKLIL (191 aa)). R707, S746, I748, E752, G777, V778, H779, S780, Q820, and E832 together coordinate ATP. Residues Q820, E832, and N834 each coordinate Mg(2+). Mn(2+)-binding residues include Q820, E832, and N834. In terms of domain architecture, MGS-like spans 930-1058 (SHLSEFGQIV…ESRCFNIEAI (129 aa)). The tract at residues 930 to 1058 (SHLSEFGQIV…ESRCFNIEAI (129 aa)) is allosteric domain.

Belongs to the CarB family. Composed of two chains; the small (or glutamine) chain promotes the hydrolysis of glutamine to ammonia, which is used by the large (or ammonia) chain to synthesize carbamoyl phosphate. Tetramer of heterodimers (alpha,beta)4. The cofactor is Mg(2+). Requires Mn(2+) as cofactor.

It catalyses the reaction hydrogencarbonate + L-glutamine + 2 ATP + H2O = carbamoyl phosphate + L-glutamate + 2 ADP + phosphate + 2 H(+). The catalysed reaction is hydrogencarbonate + NH4(+) + 2 ATP = carbamoyl phosphate + 2 ADP + phosphate + 2 H(+). It functions in the pathway amino-acid biosynthesis; L-arginine biosynthesis; carbamoyl phosphate from bicarbonate: step 1/1. The protein operates within pyrimidine metabolism; UMP biosynthesis via de novo pathway; (S)-dihydroorotate from bicarbonate: step 1/3. Functionally, large subunit of the glutamine-dependent carbamoyl phosphate synthetase (CPSase). CPSase catalyzes the formation of carbamoyl phosphate from the ammonia moiety of glutamine, carbonate, and phosphate donated by ATP, constituting the first step of 2 biosynthetic pathways, one leading to arginine and/or urea and the other to pyrimidine nucleotides. The large subunit (synthetase) binds the substrates ammonia (free or transferred from glutamine from the small subunit), hydrogencarbonate and ATP and carries out an ATP-coupled ligase reaction, activating hydrogencarbonate by forming carboxy phosphate which reacts with ammonia to form carbamoyl phosphate. The protein is Carbamoyl phosphate synthase large chain of Streptococcus pyogenes serotype M49 (strain NZ131).